The following is a 1700-amino-acid chain: A-kinase anchor protein SPHKAP (1700 aa).

3 disordered regions span residues 364–385 (SNLN…QDGE), 742–778 (IRRR…SNSH), and 793–885 (SKQD…NTQE). The segment covering 768–778 (SSSSSPLSNSH) has biased composition (low complexity). A compositionally biased stretch (polar residues) spans 822-831 (DSSTATTSSK). A compositionally biased stretch (basic and acidic residues) spans 839–855 (AGEDTKSPHHSENECRA). Polar residues predominate over residues 857–873 (SEGQRSPTVSQSRSGSQ). The tract at residues 929–946 (FAEELADTVVSMATEIAA) is PKA-RII subunit binding domain. Residues 980 to 1006 (KRKKESQGSGTAVRKHKPPRLSEIKRK) are disordered. A phosphoserine mark is found at S1025, S1085, S1107, S1120, S1121, S1124, S1259, and S1288. Disordered regions lie at residues 1374 to 1414 (DSVT…PVPI), 1481 to 1535 (IHSD…DTSS), and 1585 to 1604 (GQSE…TASP). Polar residues predominate over residues 1383-1398 (PVSSLSKTASLTNHSP). Residues 1586–1604 (QSESTEAPASGPPTGTASP) show a composition bias toward polar residues.

It belongs to the AKAP110 family. Interacts (via the PKA-RII subunit binding domain) with the RI subunit of PKA. Interacts with SPHK1; the interaction greatly reduces SPHK1 activity. As to expression, highly expressed in heart. Both isoforms abundantly expressed in ventricle. Also expressed in spleen, ovary and brain.

The protein resides in the cytoplasm. Its function is as follows. Anchoring protein that binds preferentially to the type I regulatory subunit of c-AMP-dependent protein kinase (PKA type I) and targets it to distinct subcellular compartments. May act as a converging factor linking cAMP and sphingosine signaling pathways. Plays a regulatory role in the modulation of SPHK1. The polypeptide is A-kinase anchor protein SPHKAP (SPHKAP) (Homo sapiens (Human)).